The chain runs to 257 residues: 1-(5-phosphoribosyl)-5-[(5-phosphoribosylamino)methylideneamino] imidazole-4-carboxamide isomerase (257 aa).

The active-site Proton acceptor is Asp8. Catalysis depends on Asp129, which acts as the Proton donor.

Belongs to the HisA/HisF family.

It localises to the cytoplasm. It carries out the reaction 1-(5-phospho-beta-D-ribosyl)-5-[(5-phospho-beta-D-ribosylamino)methylideneamino]imidazole-4-carboxamide = 5-[(5-phospho-1-deoxy-D-ribulos-1-ylimino)methylamino]-1-(5-phospho-beta-D-ribosyl)imidazole-4-carboxamide. It participates in amino-acid biosynthesis; L-histidine biosynthesis; L-histidine from 5-phospho-alpha-D-ribose 1-diphosphate: step 4/9. This chain is 1-(5-phosphoribosyl)-5-[(5-phosphoribosylamino)methylideneamino] imidazole-4-carboxamide isomerase, found in Trichodesmium erythraeum (strain IMS101).